Here is a 526-residue protein sequence, read N- to C-terminus: Cytochrome P450 monooxygenase COX2 (526 aa).

Residue asparagine 11 is glycosylated (N-linked (GlcNAc...) asparagine). Residues 12 to 31 (ITTNHVAAAVCAGIAVYAIV) traverse the membrane as a helical segment. N-linked (GlcNAc...) asparagine glycosylation is present at asparagine 302. Position 450 (cysteine 450) interacts with heme.

The protein belongs to the cytochrome P450 family. The cofactor is heme.

It is found in the membrane. The protein operates within secondary metabolite biosynthesis. Cytochrome P450 monooxygenase; part of the gene cluster that mediates the biosynthesis of alpha-cuprenene and oxidized derivatives. The alpha-cuprenene synthase COP6 is the only sesquiterpene synthase identified in C.cinereus that appears to be part of a biosynthetic gene cluster and is highly specific since it catalyzes the cyclization of (2E,6E)-farnesyl diphosphate into only one product, alpha-cuprenene. The cytochrome P450 monooxygenase COX2 then oxidizes the cyclohexadiene ring of alpha-cuprenene at positions 1 and 4, yielding first alpha-cuparene, followed by alpha-cuparophenol and a further yet unidentified compound resulting from one additional oxidation step. The cytochrome P450 monooxygenase COX1 then likely catalyzes the oxidation at position 9 of the pentane ring of alpha-cuprenene to give the corresponding hydroxy or ketone derivatives. This chain is Cytochrome P450 monooxygenase COX2, found in Coprinopsis cinerea (strain Okayama-7 / 130 / ATCC MYA-4618 / FGSC 9003) (Inky cap fungus).